A 122-amino-acid polypeptide reads, in one-letter code: Dihydroneopterin aldolase (122 aa).

Substrate contacts are provided by residues Glu-21, Tyr-53, and 72–73 (VE). The active-site Proton donor/acceptor is the Lys-98.

Belongs to the DHNA family. As to quaternary structure, homooctamer.

It catalyses the reaction 7,8-dihydroneopterin = 6-hydroxymethyl-7,8-dihydropterin + glycolaldehyde. The enzyme catalyses 7,8-dihydroneopterin = 7,8-dihydromonapterin. Its pathway is cofactor biosynthesis; tetrahydrofolate biosynthesis; 2-amino-4-hydroxy-6-hydroxymethyl-7,8-dihydropteridine diphosphate from 7,8-dihydroneopterin triphosphate: step 3/4. Catalyzes the conversion of 7,8-dihydroneopterin to 6-hydroxymethyl-7,8-dihydropterin. Can use L-threo-dihydroneopterin and D-erythro-dihydroneopterin as substrates for the formation of 6-hydroxymethyldihydropterin, but it can also catalyze the epimerization of carbon 2' of dihydroneopterin to dihydromonapterin at appreciable velocity. This Escherichia coli O6:H1 (strain CFT073 / ATCC 700928 / UPEC) protein is Dihydroneopterin aldolase (folB).